Consider the following 60-residue polypeptide: Large ribosomal subunit protein uL30 (60 aa).

Belongs to the universal ribosomal protein uL30 family. As to quaternary structure, part of the 50S ribosomal subunit.

The sequence is that of Large ribosomal subunit protein uL30 from Polaromonas sp. (strain JS666 / ATCC BAA-500).